The sequence spans 426 residues: Serine--tRNA ligase (426 aa).

A disordered region spans residues 36-66 (KRKHLQERTQDLQSQRNTISKEIGQKKAKGE). Residues 46–55 (DLQSQRNTIS) are compositionally biased toward polar residues. 233-235 (TAE) is an L-serine binding site. ATP is bound at residue 264 to 266 (RSE). Glu287 serves as a coordination point for L-serine. 351–354 (EISS) is an ATP binding site. Ser387 contacts L-serine.

The protein belongs to the class-II aminoacyl-tRNA synthetase family. Type-1 seryl-tRNA synthetase subfamily. Homodimer. The tRNA molecule binds across the dimer.

The protein localises to the cytoplasm. The catalysed reaction is tRNA(Ser) + L-serine + ATP = L-seryl-tRNA(Ser) + AMP + diphosphate + H(+). It carries out the reaction tRNA(Sec) + L-serine + ATP = L-seryl-tRNA(Sec) + AMP + diphosphate + H(+). It participates in aminoacyl-tRNA biosynthesis; selenocysteinyl-tRNA(Sec) biosynthesis; L-seryl-tRNA(Sec) from L-serine and tRNA(Sec): step 1/1. Catalyzes the attachment of serine to tRNA(Ser). Is also able to aminoacylate tRNA(Sec) with serine, to form the misacylated tRNA L-seryl-tRNA(Sec), which will be further converted into selenocysteinyl-tRNA(Sec). The chain is Serine--tRNA ligase from Francisella tularensis subsp. tularensis (strain FSC 198).